The chain runs to 157 residues: Endoribonuclease YbeY (157 aa).

Residues H118, H122, and H128 each coordinate Zn(2+).

The protein belongs to the endoribonuclease YbeY family. Requires Zn(2+) as cofactor.

It localises to the cytoplasm. Single strand-specific metallo-endoribonuclease involved in late-stage 70S ribosome quality control and in maturation of the 3' terminus of the 16S rRNA. This is Endoribonuclease YbeY from Bordetella bronchiseptica (strain ATCC BAA-588 / NCTC 13252 / RB50) (Alcaligenes bronchisepticus).